The following is a 191-amino-acid chain: Adenylate kinase (191 aa).

G11 to T16 is a binding site for ATP. An NMP region spans residues S31–L60. AMP contacts are provided by residues T32, R37, Q58–L60, G86–R89, and Q93. The LID stretch occupies residues K127–D137. Residue R128 participates in ATP binding. R134 and R145 together coordinate AMP. Residue N173 coordinates ATP.

This sequence belongs to the adenylate kinase family. As to quaternary structure, monomer.

Its subcellular location is the cytoplasm. The catalysed reaction is AMP + ATP = 2 ADP. Its pathway is purine metabolism; AMP biosynthesis via salvage pathway; AMP from ADP: step 1/1. In terms of biological role, catalyzes the reversible transfer of the terminal phosphate group between ATP and AMP. Plays an important role in cellular energy homeostasis and in adenine nucleotide metabolism. In Azobacteroides pseudotrichonymphae genomovar. CFP2, this protein is Adenylate kinase.